The sequence spans 485 residues: Glutamyl-tRNA(Gln) amidotransferase subunit A (485 aa).

Catalysis depends on charge relay system residues lysine 79 and serine 154. The active-site Acyl-ester intermediate is serine 178.

This sequence belongs to the amidase family. GatA subfamily. As to quaternary structure, heterotrimer of A, B and C subunits.

It carries out the reaction L-glutamyl-tRNA(Gln) + L-glutamine + ATP + H2O = L-glutaminyl-tRNA(Gln) + L-glutamate + ADP + phosphate + H(+). Functionally, allows the formation of correctly charged Gln-tRNA(Gln) through the transamidation of misacylated Glu-tRNA(Gln) in organisms which lack glutaminyl-tRNA synthetase. The reaction takes place in the presence of glutamine and ATP through an activated gamma-phospho-Glu-tRNA(Gln). The polypeptide is Glutamyl-tRNA(Gln) amidotransferase subunit A (Staphylococcus aureus (strain MRSA252)).